A 370-amino-acid polypeptide reads, in one-letter code: Dihydroorotate dehydrogenase (370 aa).

Residues lysine 82, 135 to 139 (NSFGM), and asparagine 200 contribute to the substrate site. 82–83 (KT) serves as a coordination point for FMN. An FMN-binding site is contributed by asparagine 200. Catalysis depends on cysteine 203, which acts as the Nucleophile. Residues lysine 241 and isoleucine 269 each contribute to the FMN site. Substrate is bound at residue 270–271 (NT). FMN-binding positions include glycine 297, 328–329 (GG), and 350–351 (AT).

This sequence belongs to the dihydroorotate dehydrogenase family. It depends on FMN as a cofactor.

It catalyses the reaction (S)-dihydroorotate + A = orotate + AH2. It participates in pyrimidine metabolism; UMP biosynthesis via de novo pathway. Functionally, catalyzes the conversion of dihydroorotate to orotate. Participates in the pyrimidine biosynthetic pathway. The sequence is that of Dihydroorotate dehydrogenase (pyr4) from Dictyostelium discoideum (Social amoeba).